The primary structure comprises 342 residues: S-adenosylmethionine:tRNA ribosyltransferase-isomerase (342 aa).

It belongs to the QueA family. As to quaternary structure, monomer.

It localises to the cytoplasm. It catalyses the reaction 7-aminomethyl-7-carbaguanosine(34) in tRNA + S-adenosyl-L-methionine = epoxyqueuosine(34) in tRNA + adenine + L-methionine + 2 H(+). Its pathway is tRNA modification; tRNA-queuosine biosynthesis. Its function is as follows. Transfers and isomerizes the ribose moiety from AdoMet to the 7-aminomethyl group of 7-deazaguanine (preQ1-tRNA) to give epoxyqueuosine (oQ-tRNA). The protein is S-adenosylmethionine:tRNA ribosyltransferase-isomerase of Campylobacter jejuni subsp. jejuni serotype O:6 (strain 81116 / NCTC 11828).